Here is a 250-residue protein sequence, read N- to C-terminus: MADS-box transcription factor 47 (250 aa).

Over residues 1–10 (MAGGGGGGGR) the composition is skewed to gly residues. 2 disordered regions span residues 1–20 (MAGG…AATG) and 196–250 (SRME…FSSK). Over residues 11 to 20 (GEGEGRAATG) the composition is skewed to basic and acidic residues. One can recognise an MADS-box domain in the interval 20 to 80 (GKRERIAIRR…GKLFQFASTS (61 aa)). The K-box domain maps to 106–198 (QGEDSSTCAR…QLQVSRMSRM (93 aa)). Residues 214–224 (GQSSESVTNAS) show a composition bias toward polar residues.

As to quaternary structure, may interact with MADS18. In terms of tissue distribution, expressed in roots, shoots and developing panicles. Expressed in mature stems and leaves, flowering panicles, developing seeds, and mature seeds.

Its subcellular location is the nucleus. Its function is as follows. Transcription factor that modulates expressions of multiple genes involved in cell signaling and gene transcription. Plays a negative regulatory role in brassinosteroid signaling. The protein is MADS-box transcription factor 47 of Oryza sativa subsp. japonica (Rice).